Here is a 138-residue protein sequence, read N- to C-terminus: Acidic phospholipase A2 1 (138 aa).

The N-terminal stretch at 1–16 is a signal peptide; the sequence is MRTLWIMAVLLVGVDG. 7 disulfide bridges follow: C42-C131, C44-C60, C59-C110, C65-C138, C66-C103, C73-C97, and C91-C101. Ca(2+) is bound by residues Y43, G45, and G47. H63 is an active-site residue. D64 contacts Ca(2+). D104 is an active-site residue.

Belongs to the phospholipase A2 family. Group II subfamily. D49 sub-subfamily. Homodimer. It depends on Ca(2+) as a cofactor. Expressed by the venom gland.

Its subcellular location is the secreted. It carries out the reaction a 1,2-diacyl-sn-glycero-3-phosphocholine + H2O = a 1-acyl-sn-glycero-3-phosphocholine + a fatty acid + H(+). In terms of biological role, snake venom phospholipase A2 (PLA2) that is highly lipolytic and myolytic. PLA2 catalyzes the calcium-dependent hydrolysis of the 2-acyl groups in 3-sn-phosphoglycerides. The sequence is that of Acidic phospholipase A2 1 from Protobothrops flavoviridis (Habu).